Consider the following 69-residue polypeptide: Antimicrobial peptide Eval36 (69 aa).

Positions 1 to 23 are cleaved as a signal peptide; it reads MKAQFAILVISMMLLQLIVQTES. Residue Leu37 is modified to Leucine amide. Residues 38–69 constitute a propeptide that is removed on maturation; sequence GKRGLRNLDDFQDFLDSDTSDADLRMLRDMFR.

It belongs to the non-disulfide-bridged peptide (NDBP) superfamily. Short antimicrobial peptide (group 4) family. In terms of tissue distribution, expressed by the venom gland.

It localises to the secreted. Functionally, probable antimicrobial peptide. Shows low inhibitory activity against herpes simplex virus type 1 (HSV-1). The chain is Antimicrobial peptide Eval36 from Euscorpiops validus (Scorpion).